Consider the following 727-residue polypeptide: Catalase-peroxidase (727 aa).

Residues 1 to 24 (MDQKSDSAGKCPVAHTAPRGRSNR) form a disordered region. The tryptophyl-tyrosyl-methioninium (Trp-Tyr) (with M-243) cross-link spans 95–217 (WHSAGTYRIT…LAAVQMGLIY (123 aa)). The Proton acceptor role is filled by histidine 96. The segment at residues 217–243 (YVNPEGPNGNPDPVAAARDIRETFARM) is a cross-link (tryptophyl-tyrosyl-methioninium (Tyr-Met) (with W-95)). Histidine 258 is a binding site for heme b.

Belongs to the peroxidase family. Peroxidase/catalase subfamily. In terms of assembly, homodimer or homotetramer. The cofactor is heme b. Post-translationally, formation of the three residue Trp-Tyr-Met cross-link is important for the catalase, but not the peroxidase activity of the enzyme.

It catalyses the reaction H2O2 + AH2 = A + 2 H2O. The catalysed reaction is 2 H2O2 = O2 + 2 H2O. In terms of biological role, bifunctional enzyme with both catalase and broad-spectrum peroxidase activity. In Rhizobium meliloti (strain 1021) (Ensifer meliloti), this protein is Catalase-peroxidase.